Reading from the N-terminus, the 427-residue chain is Gamma-glutamyl phosphate reductase (427 aa).

The protein belongs to the gamma-glutamyl phosphate reductase family.

It is found in the cytoplasm. The catalysed reaction is L-glutamate 5-semialdehyde + phosphate + NADP(+) = L-glutamyl 5-phosphate + NADPH + H(+). It functions in the pathway amino-acid biosynthesis; L-proline biosynthesis; L-glutamate 5-semialdehyde from L-glutamate: step 2/2. Functionally, catalyzes the NADPH-dependent reduction of L-glutamate 5-phosphate into L-glutamate 5-semialdehyde and phosphate. The product spontaneously undergoes cyclization to form 1-pyrroline-5-carboxylate. In Rhizobium johnstonii (strain DSM 114642 / LMG 32736 / 3841) (Rhizobium leguminosarum bv. viciae), this protein is Gamma-glutamyl phosphate reductase.